A 62-amino-acid chain; its full sequence is Sauvatide (62 aa).

The N-terminal stretch at 1-24 (MDILKKSLFLILFLGLVSISFCDG) is a signal peptide. Residues 25-46 (EKRQDDDEANESEEKKEIHEVE) constitute a propeptide that is removed on maturation. A Lysine amide modification is found at K58.

Expressed by the skin glands.

It localises to the secreted. Functionally, induces contraction of smooth muscle in isolated rat urinary bladder with an EC(50) value of 2.2nM. The protein is Sauvatide of Phyllomedusa sauvagei (Sauvage's leaf frog).